The sequence spans 350 residues: DNA polymerase delta subunit 3 (350 aa).

The interval 131–350 (EEKSKPLVRP…LESFFKRKAK (220 aa)) is disordered. Composition is skewed to basic and acidic residues over residues 146–162 (TTPE…KDMG) and 172–195 (MKKD…EENL). Residue Thr-223 is modified to Phosphothreonine. Ser-230 carries the phosphoserine modification. Positions 234-248 (SPKETDSNDKDKNND) are enriched in basic and acidic residues. The span at 249–262 (DLEDLLETTAEDSL) shows a compositional bias: acidic residues. Positions 274 to 286 (SETEHSKEPKSEE) are enriched in basic and acidic residues. Residues 320 to 332 (LSSSKKQETPSSN) show a composition bias toward polar residues.

DNA polymerase delta is a heterotrimer of POL3, POL32 and HYS2. POL32 can form homodimers.

The protein resides in the nucleus. DNA polymerase delta (DNA polymerase III) participates in chromosomal DNA replication. It is required during synthesis of the leading and lagging DNA strands at the replication fork and binds at/or near replication origins and moves along DNA with the replication fork. It has 3'-5' proofreading exonuclease activity that correct errors arising during DNA replication. It is also involved in DNA synthesis during DNA repair. The sequence is that of DNA polymerase delta subunit 3 (POL32) from Saccharomyces cerevisiae (strain ATCC 204508 / S288c) (Baker's yeast).